Consider the following 315-residue polypeptide: Large ribosomal subunit protein uL29m (315 aa).

This sequence belongs to the universal ribosomal protein uL29 family. Component of the mitochondrial large ribosomal subunit. Mature mitochondrial ribosomes consist of a small (37S) and a large (54S) subunit. The 37S subunit contains at least 33 different proteins and 1 molecule of RNA (15S). The 54S subunit contains at least 45 different proteins and 1 molecule of RNA (21S).

The protein localises to the mitochondrion. This chain is Large ribosomal subunit protein uL29m (MRPL4), found in Candida glabrata (strain ATCC 2001 / BCRC 20586 / JCM 3761 / NBRC 0622 / NRRL Y-65 / CBS 138) (Yeast).